A 61-amino-acid polypeptide reads, in one-letter code: Large ribosomal subunit protein uL30 (61 aa).

It belongs to the universal ribosomal protein uL30 family. Part of the 50S ribosomal subunit.

This chain is Large ribosomal subunit protein uL30, found in Nitrosomonas europaea (strain ATCC 19718 / CIP 103999 / KCTC 2705 / NBRC 14298).